The sequence spans 97 residues: DNA/RNA-binding protein Alba (97 aa).

N6-acetyllysine is present on lysine 15.

It belongs to the histone-like Alba family. Acetylated. Acetylation at Lys-15 decreases DNA-binding affinity.

Its subcellular location is the cytoplasm. It localises to the chromosome. In terms of biological role, binds double-stranded DNA tightly but without sequence specificity. Involved in DNA compaction. This Ignicoccus hospitalis (strain KIN4/I / DSM 18386 / JCM 14125) protein is DNA/RNA-binding protein Alba.